Consider the following 451-residue polypeptide: Chromosomal replication initiator protein DnaA (451 aa).

The interval Met-1–Thr-72 is domain I, interacts with DnaA modulators. The interval Thr-72 to Ala-114 is domain II. The segment covering Gly-81 to Lys-90 has biased composition (polar residues). The segment at Gly-81–Gly-106 is disordered. The segment at Asn-115–Ala-331 is domain III, AAA+ region. Residues Gly-159, Gly-161, Lys-162, and Thr-163 each contribute to the ATP site. Residues His-332–Gly-451 form a domain IV, binds dsDNA region.

This sequence belongs to the DnaA family. In terms of assembly, oligomerizes as a right-handed, spiral filament on DNA at oriC.

The protein localises to the cytoplasm. Functionally, plays an essential role in the initiation and regulation of chromosomal replication. ATP-DnaA binds to the origin of replication (oriC) to initiate formation of the DNA replication initiation complex once per cell cycle. Binds the DnaA box (a 9 base pair repeat at the origin) and separates the double-stranded (ds)DNA. Forms a right-handed helical filament on oriC DNA; dsDNA binds to the exterior of the filament while single-stranded (ss)DNA is stabiized in the filament's interior. The ATP-DnaA-oriC complex binds and stabilizes one strand of the AT-rich DNA unwinding element (DUE), permitting loading of DNA polymerase. After initiation quickly degrades to an ADP-DnaA complex that is not apt for DNA replication. Binds acidic phospholipids. The sequence is that of Chromosomal replication initiator protein DnaA from Coxiella burnetii (strain CbuK_Q154) (Coxiella burnetii (strain Q154)).